The sequence spans 101 residues: MSLTKADMAERLFEEVGLNKREAKELVELFFEEIRTALENGEPVKLSSFGNFELRDKNERPGRNPKTGEEIPISARRVVTFRPGQKLKSRVESYAGTREEQ.

This sequence belongs to the bacterial histone-like protein family. Heterodimer of an alpha and a beta chain.

In terms of biological role, this protein is one of the two subunits of integration host factor, a specific DNA-binding protein that functions in genetic recombination as well as in transcriptional and translational control. In Halorhodospira halophila (strain DSM 244 / SL1) (Ectothiorhodospira halophila (strain DSM 244 / SL1)), this protein is Integration host factor subunit alpha.